A 471-amino-acid chain; its full sequence is MLDFMDYIQLAFAEATNWNCDNSYSSLTATAQSLLDFSTPERLRVHLSSLATPHFATSYTLGTVGLIDGSVSYLYSTVPLNNTPSRSALIPLRKLARGYRQVQPPVAPVEDCGWQSCLGGLGSSESKPSGNDDSQPSPGRKATLLNATLHLPPPTILNALFLRRMSPTMQLSLAVCSTRGAPLSNSAPQASLLGQLSHDTGKYSNEYLFSTDNSLFGWRGLWNFGPDPRHPKENSSPQLSLLSAGAEAYYSPVSSLIGMSTGLRFSTLPAATEMPSSSSSASSTTTTSNHDTPISTFPYTLTLVLTPLTGSLSTTYSLRASPNLAFSSRFGFNVYSWESEMVAGCELWRKRRKPSPPPVDDDGLEWARRKMRMADTPAFAPVEPPTTHNRDEENESVLKIRVDQSWNVRLLWEGRVKELLVSAGVGLGPSSFSSPSRAANSTPAGGGQSVGGGISGRSYWHGVGVSISYSS.

The interval 429–455 (PSSFSSPSRAANSTPAGGGQSVGGGIS) is disordered. The segment covering 444-455 (AGGGQSVGGGIS) has biased composition (gly residues).

The protein belongs to the MDM10 family. In terms of assembly, component of the ER-mitochondria encounter structure (ERMES) or MDM complex, composed of mmm1, mdm10, mdm12 and mdm34. Associates with the mitochondrial outer membrane sorting assembly machinery SAM(core) complex.

It is found in the mitochondrion outer membrane. Its function is as follows. Component of the ERMES/MDM complex, which serves as a molecular tether to connect the endoplasmic reticulum and mitochondria. Components of this complex are involved in the control of mitochondrial shape and protein biogenesis and may function in phospholipid exchange. mdm10 is involved in the late assembly steps of the general translocase of the mitochondrial outer membrane (TOM complex). Functions in the tom40-specific route of the assembly of outer membrane beta-barrel proteins, including the association of tom40 with the receptor tom22 and small TOM proteins. Can associate with the SAM(core) complex as well as the mdm12-mmm1 complex, both involved in late steps of the major beta-barrel assembly pathway, that is responsible for biogenesis of all outer membrane beta-barrel proteins. May act as a switch that shuttles between both complexes and channels precursor proteins into the tom40-specific pathway. Plays a role in mitochondrial morphology and in the inheritance of mitochondria. The chain is Mitochondrial distribution and morphology protein 10 (mdmB) from Aspergillus fumigatus (strain ATCC MYA-4609 / CBS 101355 / FGSC A1100 / Af293) (Neosartorya fumigata).